Here is a 645-residue protein sequence, read N- to C-terminus: uncharacterized protein (645 aa).

The first 23 residues, Met-1–Ser-23, serve as a signal peptide directing secretion. Disordered stretches follow at residues Ile-30–Ser-58 and Asn-92–Pro-129. The span at Asn-92 to Thr-102 shows a compositional bias: polar residues. N-linked (GlcNAc...) asparagine glycosylation is present at Asn-107. Residues Asn-107–Asp-119 show a composition bias toward basic and acidic residues. Positions Cys-135–Asp-214 constitute a PAN 1 domain. Disulfide bonds link Cys-161/Cys-187 and Cys-165/Cys-175. Residues Glu-225 to Pro-247 form a disordered region. 2 PAN domains span residues Cys-281–Cys-369 and Cys-378–Cys-465. Cystine bridges form between Cys-281-Cys-369, Cys-313-Cys-341, Cys-317-Cys-329, Cys-378-Cys-465, Cys-407-Cys-436, and Cys-411-Cys-422. Asn-421 is a glycosylation site (N-linked (GlcNAc...) asparagine). Positions Ala-556–Ile-567 are enriched in basic and acidic residues. A disordered region spans residues Ala-556–Lys-582. Residue Asn-570 is glycosylated (N-linked (GlcNAc...) asparagine).

This is an uncharacterized protein from Caenorhabditis elegans.